The chain runs to 126 residues: Fumarate reductase subunit C (126 aa).

The next 3 helical transmembrane spans lie at Ile-30–Gly-50, Val-64–Phe-84, and Val-105–Leu-125.

It belongs to the FrdC family. In terms of assembly, part of an enzyme complex containing four subunits: a flavoprotein (FrdA), an iron-sulfur protein (FrdB), and two hydrophobic anchor proteins (FrdC and FrdD).

It localises to the cell membrane. In terms of biological role, anchors the catalytic components of the fumarate reductase complex to the cell membrane, binds quinones. In Mycobacterium tuberculosis (strain ATCC 25177 / H37Ra), this protein is Fumarate reductase subunit C.